A 167-amino-acid polypeptide reads, in one-letter code: Endoribonuclease YbeY (167 aa).

Zn(2+) contacts are provided by H131, H135, and H141.

Belongs to the endoribonuclease YbeY family. Requires Zn(2+) as cofactor.

The protein resides in the cytoplasm. Functionally, single strand-specific metallo-endoribonuclease involved in late-stage 70S ribosome quality control and in maturation of the 3' terminus of the 16S rRNA. The protein is Endoribonuclease YbeY of Rickettsia rickettsii (strain Iowa).